The primary structure comprises 443 residues: Phosphoglucosamine mutase (443 aa).

The Phosphoserine intermediate role is filled by Ser102. Mg(2+) is bound by residues Ser102, Asp241, Asp243, and Asp245. At Ser102 the chain carries Phosphoserine.

Belongs to the phosphohexose mutase family. Mg(2+) is required as a cofactor. Activated by phosphorylation.

It carries out the reaction alpha-D-glucosamine 1-phosphate = D-glucosamine 6-phosphate. Functionally, catalyzes the conversion of glucosamine-6-phosphate to glucosamine-1-phosphate. The protein is Phosphoglucosamine mutase of Albidiferax ferrireducens (strain ATCC BAA-621 / DSM 15236 / T118) (Rhodoferax ferrireducens).